The primary structure comprises 236 residues: 2,3,4,5-tetrahydropyridine-2,6-dicarboxylate N-acetyltransferase (236 aa).

Belongs to the transferase hexapeptide repeat family. DapH subfamily.

It carries out the reaction (S)-2,3,4,5-tetrahydrodipicolinate + acetyl-CoA + H2O = L-2-acetamido-6-oxoheptanedioate + CoA. It participates in amino-acid biosynthesis; L-lysine biosynthesis via DAP pathway; LL-2,6-diaminopimelate from (S)-tetrahydrodipicolinate (acetylase route): step 1/3. Catalyzes the transfer of an acetyl group from acetyl-CoA to tetrahydrodipicolinate. This is 2,3,4,5-tetrahydropyridine-2,6-dicarboxylate N-acetyltransferase from Brevibacillus brevis (strain 47 / JCM 6285 / NBRC 100599).